A 580-amino-acid chain; its full sequence is M-phase inducer phosphatase 2 (580 aa).

The disordered stretch occupies residues 1–24; that stretch reads MEVPQPEPAPGSALSPAGVCGGAQ. A Phosphoserine modification is found at serine 42. A compositionally biased stretch (low complexity) spans 89–107; the sequence is SLSRRASESSLSSESSESS. Disordered regions lie at residues 89-117 and 165-196; these read SLSRRASESSLSSESSESSDAGLCMDSPS and NITNSQAPDGRRKSEAGSGAASSSGEDKENDG. A Phosphoserine; by MELK modification is found at serine 169. Phosphoserine is present on serine 249. At serine 323 the chain carries Phosphoserine; by MELK and MAPK14. Residues 331-370 form a disordered region; it reads PILKRLERPQDRDTPVQNKRRRSVTPPEEQQEAEEPKARV. Residues 334 to 344 show a composition bias toward basic and acidic residues; sequence KRLERPQDRDT. The residue at position 353 (serine 353) is a Phosphoserine; by AURKA. Phosphoserine; by BRSK1 and MAPK14 is present on serine 375. Positions 431–538 constitute a Rhodanese domain; it reads IVDKFVIVDC…FFPQHPNFCE (108 aa). Serine 470 carries the post-translational modification Phosphoserine. Cysteine 487 is an active-site residue. A Phosphoserine modification is found at serine 563.

The protein belongs to the MPI phosphatase family. As to quaternary structure, interacts with MAPK14 and 14-3-3 proteins. In terms of processing, phosphorylated by BRSK1 in vitro. Phosphorylated by CHEK1, which inhibits the activity of this protein. Phosphorylation at Ser-353 by AURKA might locally participate in the control of the onset of mitosis. Phosphorylation by MELK at Ser-169 promotes localization to the centrosome and the spindle poles during mitosis. Phosphorylation at Ser-323 and Ser-375 by MAPK14 is required for binding to 14-3-3 proteins.

It is found in the cytoplasm. It localises to the cytoskeleton. The protein localises to the microtubule organizing center. The protein resides in the centrosome. Its subcellular location is the spindle pole. The catalysed reaction is O-phospho-L-tyrosyl-[protein] + H2O = L-tyrosyl-[protein] + phosphate. With respect to regulation, stimulated by B-type cyclins. In terms of biological role, tyrosine protein phosphatase which functions as a dosage-dependent inducer of mitotic progression. Directly dephosphorylates CDK1 and stimulates its kinase activity. Required for G2/M phases of the cell cycle progression and abscission during cytokinesis in a ECT2-dependent manner. The three isoforms seem to have a different level of activity. The chain is M-phase inducer phosphatase 2 (CDC25B) from Homo sapiens (Human).